A 702-amino-acid polypeptide reads, in one-letter code: Ribosomal RNA large subunit methyltransferase K/L (702 aa).

The THUMP domain maps to 43–154 (LVYQSLMWSR…KETASIALDL (112 aa)).

It belongs to the methyltransferase superfamily. RlmKL family.

It localises to the cytoplasm. It carries out the reaction guanosine(2445) in 23S rRNA + S-adenosyl-L-methionine = N(2)-methylguanosine(2445) in 23S rRNA + S-adenosyl-L-homocysteine + H(+). The enzyme catalyses guanosine(2069) in 23S rRNA + S-adenosyl-L-methionine = N(2)-methylguanosine(2069) in 23S rRNA + S-adenosyl-L-homocysteine + H(+). In terms of biological role, specifically methylates the guanine in position 2445 (m2G2445) and the guanine in position 2069 (m7G2069) of 23S rRNA. This is Ribosomal RNA large subunit methyltransferase K/L from Escherichia coli O1:K1 / APEC.